Reading from the N-terminus, the 95-residue chain is uncharacterized protein (95 aa).

Residues 12 to 32 (LASLIVSMVVLVVGLALWFFV) traverse the membrane as a helical segment. The tract at residues 66–87 (ANEPEKEAEPATAASEPKEDED) is disordered.

Its subcellular location is the cell membrane. This is an uncharacterized protein from Salmonella typhi.